Reading from the N-terminus, the 549-residue chain is Elongator complex protein 3 (549 aa).

In terms of domain architecture, Radical SAM core spans Arg-84–Pro-374. Positions 101, 111, and 114 each coordinate [4Fe-4S] cluster. Acetyl-CoA contacts are provided by residues Lys-166, Glu-476–Val-479, Phe-499–Met-501, and Tyr-532. The N-acetyltransferase domain occupies Thr-398–Asp-549.

It belongs to the ELP3 family. As to quaternary structure, component of the elongator complex. Interacts with transcriptional repressors snai1 and snai2; interaction with snai1 inhibits its ubiquitination and stabilizes it. It depends on [4Fe-4S] cluster as a cofactor.

It is found in the cytoplasm. Its subcellular location is the nucleus. It carries out the reaction uridine(34) in tRNA + acetyl-CoA + S-adenosyl-L-methionine + H2O = 5-(carboxymethyl)uridine(34) in tRNA + 5'-deoxyadenosine + L-methionine + CoA + 2 H(+). Its pathway is tRNA modification; 5-methoxycarbonylmethyl-2-thiouridine-tRNA biosynthesis. In terms of biological role, catalytic tRNA acetyltransferase subunit of the elongator complex which is required for multiple tRNA modifications, including mcm5U (5-methoxycarbonylmethyl uridine), mcm5s2U (5-methoxycarbonylmethyl-2-thiouridine), and ncm5U (5-carbamoylmethyl uridine). In the elongator complex, acts as a tRNA uridine(34) acetyltransferase by mediating formation of carboxymethyluridine in the wobble base at position 34 in tRNAs. Stabilizes transcriptional repressor snai1 by inhibiting its ubiquitination which promotes neural crest cell migration. In Xenopus tropicalis (Western clawed frog), this protein is Elongator complex protein 3.